Reading from the N-terminus, the 151-residue chain is Mini-ribonuclease 3 (151 aa).

Aspartate 28 is a catalytic residue.

The protein belongs to the MrnC RNase family. As to quaternary structure, homodimer. Requires Mg(2+) as cofactor.

Its subcellular location is the cytoplasm. Involved in correct processing of both the 5' and 3' ends of 23S rRNA precursor. Processes 30S rRNA precursor transcript even in absence of ribonuclease 3 (Rnc); Rnc processes 30S rRNA into smaller rRNA precursors. The polypeptide is Mini-ribonuclease 3 (Clostridium tetani (strain Massachusetts / E88)).